The chain runs to 509 residues: Coiled-coil domain-containing protein 181 (509 aa).

Positions 60-82 are enriched in basic and acidic residues; that stretch reads EHTKQHSDPDKSLQDDVSPRRND. Disordered regions lie at residues 60–121 and 285–367; these read EHTK…EEDE and GEPL…EEKE. Residues 320-334 show a composition bias toward polar residues; the sequence is RTQSARISPVTSTYC. Residues 335 to 375 adopt a coiled-coil conformation; that stretch reads LSPRQKELQKQLEQKREKLKREEEQRKIEEEKEKKRENDIV. A compositionally biased stretch (basic and acidic residues) spans 338–367; sequence RQKELQKQLEQKREKLKREEEQRKIEEEKE.

This sequence belongs to the CCDC181 family. Homodimer. Interacts with HOOK1. Interacts with HOOK2. Interacts with HOOK3.

The protein localises to the cytoplasm. The protein resides in the cytoskeleton. It is found in the cell projection. It localises to the cilium. Its subcellular location is the flagellum. Its function is as follows. Microtubule-binding protein that localizes to the microtubular manchette of elongating spermatids. This is Coiled-coil domain-containing protein 181 from Macaca fascicularis (Crab-eating macaque).